Here is a 448-residue protein sequence, read N- to C-terminus: Homogentisate 1,2-dioxygenase (448 aa).

Residues 1-26 form a disordered region; that stretch reads MNMLAPAAKNAFTPASPDRPAYQSGF. The active-site Proton acceptor is His-302. 2 residues coordinate Fe cation: His-345 and Glu-351. The homogentisate site is built by Tyr-360 and His-381. His-381 is a binding site for Fe cation.

Belongs to the homogentisate dioxygenase family. Hexamer; dimer of trimers. Fe cation is required as a cofactor.

It carries out the reaction homogentisate + O2 = 4-maleylacetoacetate + H(+). The protein operates within amino-acid degradation; L-phenylalanine degradation; acetoacetate and fumarate from L-phenylalanine: step 4/6. Its function is as follows. Involved in the catabolism of homogentisate (2,5-dihydroxyphenylacetate or 2,5-OH-PhAc), a central intermediate in the degradation of phenylalanine and tyrosine. Catalyzes the oxidative ring cleavage of the aromatic ring of homogentisate to yield maleylacetoacetate. The protein is Homogentisate 1,2-dioxygenase of Ralstonia nicotianae (strain ATCC BAA-1114 / GMI1000) (Ralstonia solanacearum).